We begin with the raw amino-acid sequence, 211 residues long: MRLTAKQVTWLKVCLHLAGLLPFLWLVWAINHGGLGADPVKDIQHFTGRTALKFLLATLLITPLARYAKQPLLIRTRRLLGLWCFAWATLHLTSYALLELGVNNLALLGKELITRPYLTLGIISWVILLALAFTSTQAMQRKLGKHWQQLHNFVYLVAILAPIHYLWSVKIISPQPLIYAGLAVLLLALRYKKLLSLFNRLRKQVHNKLSV.

5 consecutive transmembrane segments (helical) span residues 10–30 (WLKV…VWAI), 82–102 (LWCF…ELGV), 116–136 (PYLT…FTST), 153–173 (FVYL…KIIS), and 178–198 (IYAG…LSLF).

Belongs to the MsrQ family. In terms of assembly, heterodimer of a catalytic subunit (MsrP) and a heme-binding subunit (MsrQ). FMN is required as a cofactor. It depends on heme b as a cofactor.

Its subcellular location is the cell inner membrane. Part of the MsrPQ system that repairs oxidized periplasmic proteins containing methionine sulfoxide residues (Met-O), using respiratory chain electrons. Thus protects these proteins from oxidative-stress damage caused by reactive species of oxygen and chlorine generated by the host defense mechanisms. MsrPQ is essential for the maintenance of envelope integrity under bleach stress, rescuing a wide series of structurally unrelated periplasmic proteins from methionine oxidation, including the primary periplasmic chaperone SurA and the lipoprotein Pal. MsrQ provides electrons for reduction to the reductase catalytic subunit MsrP, using the quinone pool of the respiratory chain. The sequence is that of Protein-methionine-sulfoxide reductase heme-binding subunit MsrQ from Escherichia coli (strain 55989 / EAEC).